We begin with the raw amino-acid sequence, 871 residues long: Alanine--tRNA ligase (871 aa).

Zn(2+) is bound by residues His561, His565, Cys662, and His666.

Belongs to the class-II aminoacyl-tRNA synthetase family. Requires Zn(2+) as cofactor.

The protein localises to the cytoplasm. The catalysed reaction is tRNA(Ala) + L-alanine + ATP = L-alanyl-tRNA(Ala) + AMP + diphosphate. Catalyzes the attachment of alanine to tRNA(Ala) in a two-step reaction: alanine is first activated by ATP to form Ala-AMP and then transferred to the acceptor end of tRNA(Ala). Also edits incorrectly charged Ser-tRNA(Ala) and Gly-tRNA(Ala) via its editing domain. The sequence is that of Alanine--tRNA ligase from Dechloromonas aromatica (strain RCB).